Here is a 358-residue protein sequence, read N- to C-terminus: Phosphoserine aminotransferase (358 aa).

Arg-41 provides a ligand contact to L-glutamate. Residues 75-76 (AS), Trp-100, Thr-148, Asp-167, and Gln-190 contribute to the pyridoxal 5'-phosphate site. Lys-191 is modified (N6-(pyridoxal phosphate)lysine). 233-234 (NT) serves as a coordination point for pyridoxal 5'-phosphate.

This sequence belongs to the class-V pyridoxal-phosphate-dependent aminotransferase family. SerC subfamily. As to quaternary structure, homodimer. It depends on pyridoxal 5'-phosphate as a cofactor.

Its subcellular location is the cytoplasm. The catalysed reaction is O-phospho-L-serine + 2-oxoglutarate = 3-phosphooxypyruvate + L-glutamate. It carries out the reaction 4-(phosphooxy)-L-threonine + 2-oxoglutarate = (R)-3-hydroxy-2-oxo-4-phosphooxybutanoate + L-glutamate. The protein operates within amino-acid biosynthesis; L-serine biosynthesis; L-serine from 3-phospho-D-glycerate: step 2/3. It participates in cofactor biosynthesis; pyridoxine 5'-phosphate biosynthesis; pyridoxine 5'-phosphate from D-erythrose 4-phosphate: step 3/5. Functionally, catalyzes the reversible conversion of 3-phosphohydroxypyruvate to phosphoserine and of 3-hydroxy-2-oxo-4-phosphonooxybutanoate to phosphohydroxythreonine. In Campylobacter jejuni (strain RM1221), this protein is Phosphoserine aminotransferase.